The chain runs to 1341 residues: DNA-directed RNA polymerase subunit beta (1341 aa).

Belongs to the RNA polymerase beta chain family. In terms of assembly, the RNAP catalytic core consists of 2 alpha, 1 beta, 1 beta' and 1 omega subunit. When a sigma factor is associated with the core the holoenzyme is formed, which can initiate transcription.

The catalysed reaction is RNA(n) + a ribonucleoside 5'-triphosphate = RNA(n+1) + diphosphate. Its function is as follows. DNA-dependent RNA polymerase catalyzes the transcription of DNA into RNA using the four ribonucleoside triphosphates as substrates. The sequence is that of DNA-directed RNA polymerase subunit beta from Photobacterium profundum (strain SS9).